The chain runs to 555 residues: Inositol 1,4,5-triphosphate receptor associated 2 (555 aa).

Residues 1-495 are Cytoplasmic-facing; sequence MESTPFSGVA…LKSSIRKANK (495 aa). Disordered stretches follow at residues 84 to 103 and 128 to 147; these read SLPLPRHTSSTDGTITSSDP and RSASPTIEAQGTSPAHDNIA. A Phosphothreonine modification is found at Thr-91. Residues 91-102 are compositionally biased toward low complexity; sequence TSSTDGTITSSD. Positions 129-142 are enriched in polar residues; it reads SASPTIEAQGTSPA. Positions 227-341 form a coiled coil; sequence TLEKRVKLEE…LEELKQVLLQ (115 aa). 3 positions are modified to phosphoserine: Ser-363, Ser-370, and Ser-424. Residues 437–469 form a disordered region; that stretch reads ELKTKDDSEPSGEETVERTRKPSLSEKKNNPSK. Residues 451-465 are compositionally biased toward basic and acidic residues; the sequence is TVERTRKPSLSEKKN. The chain crosses the membrane as a helical; Anchor for type IV membrane protein span at residues 496–516; it reads ALWLSIAFIVLFAALMSFLTG. Over 517–555 the chain is Lumenal; sequence QLFQKSVDAAPTQQEDSWTSLEHILWPFTRLRHNGPPPV.

Belongs to the IRAG2 family. As to quaternary structure, interacts (via coiled-coil domain) with ITPR3. Interacts with SUN1 and SUN2. Interacts with microtubules. Interacts with HCN4; regulates HCN4 channel activity. The removal of the C-terminal lumenal domain occurs by proteolytic processing. As to expression, expressed at high levels in pre B-cells, mature B-cells and pre T-cells. Expressed at low levels in mature T-cells and plasma B-cells. Expressed in germinal center B-cells, splenic marginal zone cells and B-cell lymphomas. Expressed in neuronal cells in the cerebral cortex, epithelial cells in tonsil, adrenal glands, zymogen-producing cells in the stomach and epithelial cells in seminal vesicles.

The protein localises to the cytoplasm. It is found in the endoplasmic reticulum membrane. It localises to the nucleus envelope. Its subcellular location is the cytoskeleton. The protein resides in the microtubule organizing center. The protein localises to the centrosome. It is found in the spindle pole. It localises to the chromosome. Functionally, plays a role in the delivery of peptides to major histocompatibility complex (MHC) class I molecules; this occurs in a transporter associated with antigen processing (TAP)-independent manner. May play a role in taste signal transduction via ITPR3. May play a role during fertilization in pronucleus congression and fusion. Plays a role in maintaining nuclear shape, maybe as a component of the LINC complex and through interaction with microtubules. Plays a role in the regulation of cellular excitability by regulating the hyperpolarization-activated cyclic nucleotide-gated HCN4 channel activity. This Homo sapiens (Human) protein is Inositol 1,4,5-triphosphate receptor associated 2.